Reading from the N-terminus, the 236-residue chain is ATP synthase subunit a (236 aa).

The next 5 helical transmembrane spans lie at 17-37, 76-96, 113-133, 170-190, and 196-216; these read WTNL…LFGL, SFFV…GLII, PVVT…AGVA, IFGN…MAFS, and MIVS…IGAI.

Belongs to the ATPase A chain family. In terms of assembly, F-type ATPases have 2 components, CF(1) - the catalytic core - and CF(0) - the membrane proton channel. CF(1) has five subunits: alpha(3), beta(3), gamma(1), delta(1), epsilon(1). CF(0) has three main subunits: a(1), b(2) and c(9-12). The alpha and beta chains form an alternating ring which encloses part of the gamma chain. CF(1) is attached to CF(0) by a central stalk formed by the gamma and epsilon chains, while a peripheral stalk is formed by the delta and b chains.

The protein localises to the cell membrane. In terms of biological role, key component of the proton channel; it plays a direct role in the translocation of protons across the membrane. This is ATP synthase subunit a from Limosilactobacillus fermentum (strain NBRC 3956 / LMG 18251) (Lactobacillus fermentum).